The sequence spans 397 residues: Serpin-Z7 (397 aa).

Position 2 is an N-acetylalanine (A2). The RCL stretch occupies residues G344–A368.

The protein belongs to the serpin family. As to expression, highly expressed in endosperm, at intermediate level in embryo and at lower levels in roots.

Functionally, inhibits chymotrypsin in vitro. The chain is Serpin-Z7 (PAZ7) from Hordeum vulgare (Barley).